The primary structure comprises 205 residues: Small ribosomal subunit protein uS5 (205 aa).

Positions 49 to 112 (LVDEVLDINM…VSAKINLVKV (64 aa)) constitute an S5 DRBM domain.

It belongs to the universal ribosomal protein uS5 family. As to quaternary structure, part of the 30S ribosomal subunit. Contacts protein S4.

Its function is as follows. With S4 and S12 plays an important role in translational accuracy. In Methanospirillum hungatei JF-1 (strain ATCC 27890 / DSM 864 / NBRC 100397 / JF-1), this protein is Small ribosomal subunit protein uS5.